Consider the following 1930-residue polypeptide: MSIQFFSYDVGGLIVKEVRLLILWRRSALPNGRTLFARMTQALRIASSDKKYRSIFDRTSLLAFFATPHRSTQHQSPESVALALLNQCYCGLISPWISIFPPNFSKVVARSEVEFRPPTRAHILNVFQDPGPASPIKDSVVVHKSCAVLGVDGEVLIGLDCSHYTLARLLKARDKRYLLRQASHAALRHGKAFQQVVGLFFLDSIRTFDAEGPKFECRKVVSQLASLPQLQSWRQGSVDSRVLWFGTPAMLDPTSLFRTLRSQIQEENQLGDPIFIRVDSTLHRHNELSEPQILASMCQQILRQQPQLTSALQDLLLNVEDAAVGSRDCWKQRTLWNCLLVLLYHPKDAETFCFIDATSSLQTKNLAGQLESVMKESEMPLRLIVSCRSTAKQTPEASTQVDVDLSDAGFDEPLRQDLEEWIRESLECGLTDSTLREALLTQILSSGDFHLARHALEFFASTGSWLTKWSVPSVWAMLSKQSAAELFIEDNIRRHGQWLLIPMLWALEAFEPMQVDEIDVALMLEDNGVAGQVEDFINLLPGISTIRRGVFVIADHVRPAFDYLWGKYFATYQHHVYLAKSCVAALRHHLRVTPAIPQLREDKSSDAAARLCTYAAMNWVRHFSLQRNSETTKYVPHPTIITANETDPGSPNEHAGVSEAFLEDPELSRLWITHLRRALDLDGLDEELGHLILPETLGSRLGICTGWAIRISRQLASMRLSSERDVTNSLLVIGSETDDLAMVQSCLSADPSPTEHTLGYALAAASDPIKEKLLQQVGEPSDEFLYRALLSSICFGNVSVTEDLLVRITDKVRVAQVTPLEGSKLQWPQANESSESAETFRHTPLGVATAYGDADVIDLLINHDISWWDLEERSPPPGTWNALHHAALGGQRNIMCKLLLQQRKGVLNSSARIPNTVTESGNTPLILAASRGFHKIVALLLEDGSMRGYGVDVNIQNEQRSSALLAAARYGFSQTLEMLLTYEGIDYSKTDSNGASILHLALVNDREAAALQILAHKDIFSNEMEYQEANMEANSVNNFEDDDSFSESSVDTTDVVYTVPARPRISLHQKDGSGLTSLTIAIWRNLKSIVEILIAMDADANGPEGEFEAPLVAAAEVGSFELFTMFTKIGATKTEAALNTISTGRTRPLHAACAMGHLEVVRELLKDSVTQLSHTDSNQRTPLCAAISRDQNHVISVLLDRETETGLQEGLWEAARSGKAHILDQLLRRGAEINAQDEYGNTALQWASYYNKPRCVERLLLGGARLDLLDCDNVNALGDAARSGSAEPLKLLVDVGVDVNAEAGGDTALCRAIWAEEVECVSVLLQGGAKFILSSAQSRFENLLTFAVQVSSPEILRLLLKAPEERDLAPTLRSACAMQSTSQLEVLLEFYDPAKVDLGSGWTILHLAAVHGTLAGLTKVLDHATGRAALNYGPKKVGTPFEMAAFSSKESLSKVEHLYSNAALPGLVQPSSRFGTALNAASYRLNDPVVVYLLQKMQLEDINASGARYGNAIQNMLASAWMDTERSLKLLGILLEAGVSLTPTSADRHGTALHTAALFSPKPLVEKVIETSRMLADERDGEGRLPIHLSALQEEWASMMLLSTTTSTIRSVDKMGRNAVHLAAAAGARSVLEKIFEVEENEDLLLEADFDGWTPFHWACRGEDDDCARFLIEKARKIFDSKWDSMKHELVTTDEKTWTPLDVARFHQRREVELLLSLGMTTSDAENWMPDQSQNLGSYCDSCACQIWHEEHHSSALHCKKLYLRFNGWSRMCQLAPTAKRKYTPTLLGYKTCFKVADNLVKARLAKVLVPHSQGPLQRKGRGKGEGEEDEEGIATVENYPVSQSCGVEMIRAFVIDDRRIQPDATRNLNHEVSVGSEDQTQMSLGTGRLFVQSVDSPLEMVMDVAAIFLSSPKSAHKQDETTRAFATAK.

ANK repeat units lie at residues 840–872, 878–908, 920–949, 959–989, 993–1023, 1073–1102, 1106–1135, 1144–1174, 1178–1205, 1206–1235, 1239–1268, 1272–1301, 1304–1333, 1339–1368, 1400–1429, 1514–1543, 1548–1577, 1615–1644, 1651–1680, and 1696–1724; these read FRHT…DLEE, GTWN…GVLN, SGNT…MRGY, QRSS…DYSK, NGAS…FSNE, SGLT…DANG, EFEA…TKTE, GRTR…QLSH, NQRT…ETET, GLQE…EINA, YGNT…RLDL, DNVN…DVNA, GGDT…KFIL, RFEN…ERDL, SGWT…GRAA, QNML…SLTP, RHGT…MLAD, MGRN…NEDL, DGWT…KIFD, and KTWT…TTSD.

It participates in mycotoxin biosynthesis. In terms of biological role, ankyrin repeat domain-containing protein; part of the satratoxin SC1 cluster involved in the biosynthesis of satratoxins, trichothecene mycotoxins that are associated with human food poisonings. Satratoxins are suggested to be made by products of multiple gene clusters (SC1, SC2 and SC3) that encode 21 proteins in all, including polyketide synthases, acetyltransferases, and other enzymes expected to modify the trichothecene skeleton. SC1 encodes 10 proteins, SAT1 to SAT10. The largest are SAT8, which encodes a putative polyketide synthase (PKS) with a conventional non-reducing architecture, and SAT10, a putative protein containing four ankyrin repeats and thus may be involved in protein scaffolding. The putative short-chain reductase SAT3 may assist the PKS in some capacity. SAT6 contains a secretory lipase domain and acts probably as a trichothecene esterase. SAT5 encodes a putative acetyltransferase, and so, with SAT6, may affect endogenous protection from toxicity. The probable transcription factor SAT9 may regulate the expression of the SC1 cluster. SC2 encodes proteins SAT11 to SAT16, the largest of which encodes the putative reducing PKS SAT13. SAT11 is a cytochrome P450 monooxygenase, while SAT14 and SAT16 are probable acetyltransferases. The SC2 cluster may be regulated by the transcription factor SAT15. SC3 is a small cluster that encodes 5 proteins, SAT17 to SAT21. SAT21 is a putative MFS-type transporter which may have a role in exporting secondary metabolites. The four other proteins putatively encoded in SC3 include the taurine hydroxylase-like protein SAT17, the O-methyltransferase SAT18, the acetyltransferase SAT19, and the Cys6-type zinc finger SAT20, the latter being probably involved in regulation of SC3 expression. The protein is Ankyrin repeat domain-containing protein SAT10 of Stachybotrys chartarum (strain CBS 109288 / IBT 7711) (Toxic black mold).